We begin with the raw amino-acid sequence, 294 residues long: NAD kinase (294 aa).

Asp-74 acts as the Proton acceptor in catalysis. NAD(+) is bound by residues 74-75 (DG), 148-149 (NE), His-159, Arg-176, Asp-178, 189-194 (TAYSLS), and Gln-249.

Belongs to the NAD kinase family. A divalent metal cation serves as cofactor.

It is found in the cytoplasm. It catalyses the reaction NAD(+) + ATP = ADP + NADP(+) + H(+). Its function is as follows. Involved in the regulation of the intracellular balance of NAD and NADP, and is a key enzyme in the biosynthesis of NADP. Catalyzes specifically the phosphorylation on 2'-hydroxyl of the adenosine moiety of NAD to yield NADP. The sequence is that of NAD kinase from Vibrio vulnificus (strain CMCP6).